Reading from the N-terminus, the 329-residue chain is uncharacterized protein (329 aa).

Coiled coils occupy residues 57–120 (KKEE…QEVT) and 225–251 (QRQR…GNMM).

This is an uncharacterized protein from Homo sapiens (Human).